The sequence spans 212 residues: Thymidylate kinase (212 aa).

Position 10 to 17 (10 to 17 (GLEGAGKT)) interacts with ATP.

The protein belongs to the thymidylate kinase family.

It carries out the reaction dTMP + ATP = dTDP + ADP. Phosphorylation of dTMP to form dTDP in both de novo and salvage pathways of dTTP synthesis. The polypeptide is Thymidylate kinase (Photorhabdus laumondii subsp. laumondii (strain DSM 15139 / CIP 105565 / TT01) (Photorhabdus luminescens subsp. laumondii)).